The following is a 422-amino-acid chain: Inositol phosphorylceramide synthase catalytic subunit aur1 (422 aa).

Residues 1–47 are Cytoplasmic-facing; the sequence is MSALSTLKKRLAACNRASQYKLETSLNPMPTFRLLRNTKWSWTHLQY. 2 helical membrane-spanning segments follow: residues 48–68 and 69–85; these read VFLAGNLIFACIVIESPGFWG and KFGIACLLAIALTVPLT. Residues 86 to 87 lie on the Cytoplasmic side of the membrane; that stretch reads RQ. A helical transmembrane segment spans residues 88–108; the sequence is IFFPAIVIITWAILFYSCRFI. Over 109–159 the chain is Lumenal; that stretch reads PERWRPPIWVRVLPTLENILYGSNLSSLLSKTTHSILDILAWVPYGVMHYS. Asn132 carries an N-linked (GlcNAc...) asparagine glycan. Residues 160-180 traverse the membrane as a helical segment; that stretch reads APFIISFILFIFAPPGTLPVW. Residues 181-183 lie on the Cytoplasmic side of the membrane; the sequence is ART. A helical membrane pass occupies residues 184–204; it reads FGYMNLFGVLIQMAFPCSPPW. Residues 205–245 lie on the Lumenal side of the membrane; sequence YENMYGLEPATYAVRGSPGGLARIDALFGTSIYTDGFSNSP. A helical membrane pass occupies residues 246 to 266; it reads VVFGAFPSLHAGWAMLEALFL. Topologically, residues 267 to 274 are cytoplasmic; that stretch reads SHVFPRYR. 2 helical membrane passes run 275–292 and 293–313; these read FCFYGYVLWLCWCTMYLT and HHYFVDLVGGMCLAIICFVFA. Topologically, residues 314–422 are cytoplasmic; the sequence is QKLRLPQLQT…SSIFDASHLP (109 aa). Ser353 carries the phosphoserine modification. The tract at residues 386–406 is disordered; it reads EWSVGSSSPEPLPSPAADLID.

The protein belongs to the AUR1 family. As to quaternary structure, component of the inositol phosphorylceramide synthase complex composed of at least aur1 and kei1.

The protein localises to the golgi apparatus. It localises to the golgi stack membrane. With respect to regulation, inhibited by aureobasidin A (AbA). Catalytic component of the inositol phosphorylceramide synthase which catalyzes the addition of a phosphorylinositol group onto ceramide to form inositol phosphorylceramide, an essential step in sphingolipid biosynthesis. This chain is Inositol phosphorylceramide synthase catalytic subunit aur1 (aur1), found in Schizosaccharomyces pombe (strain 972 / ATCC 24843) (Fission yeast).